The sequence spans 382 residues: Non-structural maintenance of chromosomes element 4 homolog A (382 aa).

Residues 1 to 21 are compositionally biased toward basic and acidic residues; sequence MSGDSSGRRPEGRGRGRDPHR. A disordered region spans residues 1–80; that stretch reads MSGDSSGRRP…ASLEEETDPS (80 aa). Low complexity predominate over residues 31–41; the sequence is RSPLSPGSRRG. The segment covering 42–55 has biased composition (basic and acidic residues); that stretch reads AAPERREAPERPGL. Positions 56–78 are enriched in acidic residues; that stretch reads EDTEPSDSGDEMIDPASLEEETD. The residue at position 342 (T342) is a Phosphothreonine. Residue S374 is modified to Phosphoserine.

It belongs to the NSE4 family. As to quaternary structure, component of the SMC5-SMC6 complex which consists at least of SMC5, SMC6, NSMCE2, NSMCE1, NSMCE4A or EID3 and NSMCE3. NSMCE1, NSMCE4A or EID3 and NSMCE3 probably form a subcomplex that bridges the head domains of the SMC5:SMC6 heterodimer. Interacts with NSMCE3.

The protein resides in the nucleus. The protein localises to the chromosome. It is found in the telomere. Functionally, component of the SMC5-SMC6 complex, a complex involved in repair of DNA double-strand breaks by homologous recombination. The complex may promote sister chromatid homologous recombination by recruiting the SMC1-SMC3 cohesin complex to double-strand breaks. The complex is required for telomere maintenance via recombination and mediates sumoylation of shelterin complex (telosome) components. This chain is Non-structural maintenance of chromosomes element 4 homolog A (NSMCE4A), found in Bos taurus (Bovine).